Here is a 620-residue protein sequence, read N- to C-terminus: 1-deoxy-D-xylulose-5-phosphate synthase (620 aa).

Residues His80 and 121–123 each bind thiamine diphosphate; that span reads GHS. Asp152 lines the Mg(2+) pocket. Thiamine diphosphate contacts are provided by residues 153-154, Asn181, Tyr288, and Glu370; that span reads GA. Asn181 lines the Mg(2+) pocket.

This sequence belongs to the transketolase family. DXPS subfamily. As to quaternary structure, homodimer. Mg(2+) serves as cofactor. The cofactor is thiamine diphosphate.

It carries out the reaction D-glyceraldehyde 3-phosphate + pyruvate + H(+) = 1-deoxy-D-xylulose 5-phosphate + CO2. It functions in the pathway metabolic intermediate biosynthesis; 1-deoxy-D-xylulose 5-phosphate biosynthesis; 1-deoxy-D-xylulose 5-phosphate from D-glyceraldehyde 3-phosphate and pyruvate: step 1/1. Functionally, catalyzes the acyloin condensation reaction between C atoms 2 and 3 of pyruvate and glyceraldehyde 3-phosphate to yield 1-deoxy-D-xylulose-5-phosphate (DXP). In Klebsiella pneumoniae subsp. pneumoniae (strain ATCC 700721 / MGH 78578), this protein is 1-deoxy-D-xylulose-5-phosphate synthase.